Consider the following 249-residue polypeptide: Probable phosphatase VVA0289 (249 aa).

Residues His-8, His-10, His-16, His-41, Glu-74, His-102, His-132, Asp-194, and His-196 each contribute to the Zn(2+) site.

Belongs to the PHP family. It depends on Zn(2+) as a cofactor.

The chain is Probable phosphatase VVA0289 from Vibrio vulnificus (strain YJ016).